The primary structure comprises 213 residues: Thymidylate kinase (213 aa).

An ATP-binding site is contributed by 10 to 17 (GLEGAGKT).

It belongs to the thymidylate kinase family.

It carries out the reaction dTMP + ATP = dTDP + ADP. Phosphorylation of dTMP to form dTDP in both de novo and salvage pathways of dTTP synthesis. In Escherichia fergusonii (strain ATCC 35469 / DSM 13698 / CCUG 18766 / IAM 14443 / JCM 21226 / LMG 7866 / NBRC 102419 / NCTC 12128 / CDC 0568-73), this protein is Thymidylate kinase.